The following is a 384-amino-acid chain: MTQRNAIVVGGGIGGLTAASALARQGWRVQLHERQPEIRAVGAGIYIWDNGLFALDAVHAYSEAIEGAHEPPSIDMRGQSGKTLMRIKINGESQPRCLTLLRDQLIKALVNAAKDAGVELVTNSSVVAVRPEGEVHFEHGDHSTTDLVVVADGVHSRLRDSVDLSYSRIRMSQGAARIMIPQSSHELPAEDRGRILESFHGSRRLLYTPCTPELVYLAFTCDSDDPAISGAYINTSEWSRSFPTLSDALRATEGVPATRWDTFEYVRLASWSRGKVAFLGDAAHAQPPYLGQGGGTAMTNAIALANAVSSDMELSEALATWERITRPGIESTQRTSYQQRLLNYVPDRVRNPLVRIAGLTSNVAKSQLKATEIRPTLGSTGGSR.

This sequence belongs to the 3-hydroxybenzoate 6-hydroxylase family.

The catalysed reaction is 2-heptyl-4(1H)-quinolone + NADH + O2 + H(+) = 2-heptyl-3-hydroxy-4(1H)-quinolone + NAD(+) + H2O. Its function is as follows. Involved in the degradation of the Pseudomonas aeruginosa quorum sensing signal molecule HHQ (2-heptyl-4-quinolone) to anthranilic acid. Probably catalyzes the hydroxylation of HHQ to PQS (2-heptyl-3-hydroxy-4-quinolone). This chain is Probable 2-heptyl-3-hydroxy-4(1H)-quinolone synthase AqdB2, found in Rhodococcus erythropolis (Arthrobacter picolinophilus).